Consider the following 432-residue polypeptide: Histidine--tRNA ligase (432 aa).

Belongs to the class-II aminoacyl-tRNA synthetase family. As to quaternary structure, homodimer.

It is found in the cytoplasm. It catalyses the reaction tRNA(His) + L-histidine + ATP = L-histidyl-tRNA(His) + AMP + diphosphate + H(+). The polypeptide is Histidine--tRNA ligase (Ralstonia nicotianae (strain ATCC BAA-1114 / GMI1000) (Ralstonia solanacearum)).